The following is a 282-amino-acid chain: Thiazole synthase (282 aa).

The active-site Schiff-base intermediate with DXP is lysine 113. Residues glycine 174, 201–202 (AG), and 223–224 (NT) each bind 1-deoxy-D-xylulose 5-phosphate.

It belongs to the ThiG family. In terms of assembly, homotetramer. Forms heterodimers with either ThiH or ThiS.

The protein localises to the cytoplasm. It catalyses the reaction [ThiS sulfur-carrier protein]-C-terminal-Gly-aminoethanethioate + 2-iminoacetate + 1-deoxy-D-xylulose 5-phosphate = [ThiS sulfur-carrier protein]-C-terminal Gly-Gly + 2-[(2R,5Z)-2-carboxy-4-methylthiazol-5(2H)-ylidene]ethyl phosphate + 2 H2O + H(+). The protein operates within cofactor biosynthesis; thiamine diphosphate biosynthesis. Functionally, catalyzes the rearrangement of 1-deoxy-D-xylulose 5-phosphate (DXP) to produce the thiazole phosphate moiety of thiamine. Sulfur is provided by the thiocarboxylate moiety of the carrier protein ThiS. In vitro, sulfur can be provided by H(2)S. The protein is Thiazole synthase of Cupriavidus metallidurans (strain ATCC 43123 / DSM 2839 / NBRC 102507 / CH34) (Ralstonia metallidurans).